Consider the following 196-residue polypeptide: Protein LIGHT-DEPENDENT SHORT HYPOCOTYLS 6 (196 aa).

Basic and acidic residues predominate over residues methionine 1–aspartate 16. Disordered regions lie at residues methionine 1–lysine 36 and alanine 149–proline 196. Residues arginine 31–lysine 158 enclose the ALOG domain. A Nuclear localization signal motif is present at residues lysine 156–lysine 160.

Belongs to the plant homeotic and developmental regulators ALOG protein family.

The protein localises to the nucleus. Its function is as follows. Probable transcription regulator that acts as a developmental regulator by promoting cell growth in response to light. In Arabidopsis thaliana (Mouse-ear cress), this protein is Protein LIGHT-DEPENDENT SHORT HYPOCOTYLS 6 (LSH6).